A 369-amino-acid chain; its full sequence is Aminomethyltransferase (369 aa).

This sequence belongs to the GcvT family. In terms of assembly, the glycine cleavage system is composed of four proteins: P, T, L and H.

It carries out the reaction N(6)-[(R)-S(8)-aminomethyldihydrolipoyl]-L-lysyl-[protein] + (6S)-5,6,7,8-tetrahydrofolate = N(6)-[(R)-dihydrolipoyl]-L-lysyl-[protein] + (6R)-5,10-methylene-5,6,7,8-tetrahydrofolate + NH4(+). Its function is as follows. The glycine cleavage system catalyzes the degradation of glycine. This is Aminomethyltransferase from Synechococcus sp. (strain WH7803).